The following is a 312-amino-acid chain: Acetyl-coenzyme A carboxylase carboxyl transferase subunit alpha (312 aa).

The CoA carboxyltransferase C-terminal domain maps to 36-286 (RLDKEVKSIY…KEYFLDALRT (251 aa)).

The protein belongs to the AccA family. Acetyl-CoA carboxylase is a heterohexamer composed of biotin carboxyl carrier protein (AccB), biotin carboxylase (AccC) and two subunits each of ACCase subunit alpha (AccA) and ACCase subunit beta (AccD).

The protein resides in the cytoplasm. The enzyme catalyses N(6)-carboxybiotinyl-L-lysyl-[protein] + acetyl-CoA = N(6)-biotinyl-L-lysyl-[protein] + malonyl-CoA. The protein operates within lipid metabolism; malonyl-CoA biosynthesis; malonyl-CoA from acetyl-CoA: step 1/1. Component of the acetyl coenzyme A carboxylase (ACC) complex. First, biotin carboxylase catalyzes the carboxylation of biotin on its carrier protein (BCCP) and then the CO(2) group is transferred by the carboxyltransferase to acetyl-CoA to form malonyl-CoA. The polypeptide is Acetyl-coenzyme A carboxylase carboxyl transferase subunit alpha (Helicobacter pylori (strain J99 / ATCC 700824) (Campylobacter pylori J99)).